Reading from the N-terminus, the 208-residue chain is Outer-membrane lipoprotein carrier protein (208 aa).

The N-terminal stretch at 1–25 is a signal peptide; sequence MKKLFSAKLFSALVLSFSLFSTAHA.

It belongs to the LolA family. Monomer.

Its subcellular location is the periplasm. Its function is as follows. Participates in the translocation of lipoproteins from the inner membrane to the outer membrane. Only forms a complex with a lipoprotein if the residue after the N-terminal Cys is not an aspartate (The Asp acts as a targeting signal to indicate that the lipoprotein should stay in the inner membrane). The chain is Outer-membrane lipoprotein carrier protein from Vibrio campbellii (strain ATCC BAA-1116).